The sequence spans 105 residues: ATP synthase F(0) complex subunit a (105 aa).

3 helical membrane passes run 14 to 34, 47 to 67, and 72 to 92; these read EGTP…SLFI, LTAG…LLPM, and AILT…VAMI.

This sequence belongs to the ATPase A chain family. As to quaternary structure, component of the ATP synthase complex composed at least of ATP5F1A/subunit alpha, ATP5F1B/subunit beta, ATP5MC1/subunit c (homooctomer), MT-ATP6/subunit a, MT-ATP8/subunit 8, ATP5ME/subunit e, ATP5MF/subunit f, ATP5MG/subunit g, ATP5MK/subunit k, ATP5MJ/subunit j, ATP5F1C/subunit gamma, ATP5F1D/subunit delta, ATP5F1E/subunit epsilon, ATP5PF/subunit F6, ATP5PB/subunit b, ATP5PD/subunit d, ATP5PO/subunit OSCP. ATP synthase complex consists of a soluble F(1) head domain (subunits alpha(3) and beta(3)) - the catalytic core - and a membrane F(0) domain - the membrane proton channel (subunits c, a, 8, e, f, g, k and j). These two domains are linked by a central stalk (subunits gamma, delta, and epsilon) rotating inside the F1 region and a stationary peripheral stalk (subunits F6, b, d, and OSCP). Interacts with DNAJC30; interaction is direct.

The protein localises to the mitochondrion inner membrane. It catalyses the reaction H(+)(in) = H(+)(out). Functionally, subunit a, of the mitochondrial membrane ATP synthase complex (F(1)F(0) ATP synthase or Complex V) that produces ATP from ADP in the presence of a proton gradient across the membrane which is generated by electron transport complexes of the respiratory chain. ATP synthase complex consist of a soluble F(1) head domain - the catalytic core - and a membrane F(1) domain - the membrane proton channel. These two domains are linked by a central stalk rotating inside the F(1) region and a stationary peripheral stalk. During catalysis, ATP synthesis in the catalytic domain of F(1) is coupled via a rotary mechanism of the central stalk subunits to proton translocation. With the subunit c (ATP5MC1), forms the proton-conducting channel in the F(0) domain, that contains two crucial half-channels (inlet and outlet) that facilitate proton movement from the mitochondrial intermembrane space (IMS) into the matrix. Protons are taken up via the inlet half-channel and released through the outlet half-channel, following a Grotthuss mechanism. The protein is ATP synthase F(0) complex subunit a of Salmo trutta (Brown trout).